A 165-amino-acid polypeptide reads, in one-letter code: Free methionine-R-sulfoxide reductase (165 aa).

Positions 49–149 constitute a GAF domain; it reads LLEDDTLVLG…LRQLVAQLEK (101 aa).

It belongs to the free Met sulfoxide reductase family.

The catalysed reaction is [thioredoxin]-disulfide + L-methionine + H2O = L-methionine (R)-S-oxide + [thioredoxin]-dithiol. Its function is as follows. Catalyzes the reversible oxidation-reduction of the R-enantiomer of free methionine sulfoxide to methionine. Specific for free L-methionine-(R)-S-oxide. This Escherichia coli (strain K12) protein is Free methionine-R-sulfoxide reductase (msrC).